The sequence spans 235 residues: Purine nucleoside phosphorylase DeoD-type (235 aa).

His-4 is a binding site for a purine D-ribonucleoside. Phosphate is bound by residues Gly-20, Arg-24, Arg-43, and 87–90 (RVGT). A purine D-ribonucleoside is bound by residues Glu-162, 179 to 181 (EME), and 203 to 204 (SD). Residue Asp-204 is the Proton donor of the active site.

Belongs to the PNP/UDP phosphorylase family. In terms of assembly, homohexamer; trimer of homodimers.

The catalysed reaction is a purine D-ribonucleoside + phosphate = a purine nucleobase + alpha-D-ribose 1-phosphate. It catalyses the reaction a purine 2'-deoxy-D-ribonucleoside + phosphate = a purine nucleobase + 2-deoxy-alpha-D-ribose 1-phosphate. Functionally, catalyzes the reversible phosphorolytic breakdown of the N-glycosidic bond in the beta-(deoxy)ribonucleoside molecules, with the formation of the corresponding free purine bases and pentose-1-phosphate. The protein is Purine nucleoside phosphorylase DeoD-type of Bacillus cereus (strain ZK / E33L).